Reading from the N-terminus, the 465-residue chain is Glutamate--tRNA ligase 1 (465 aa).

The 'HIGH' region signature appears at 8–18; sequence PSPTGNLHIGG. A 'KMSKS' region motif is present at residues 236–240; that stretch reads KLSKR. K239 is an ATP binding site.

The protein belongs to the class-I aminoacyl-tRNA synthetase family. Glutamate--tRNA ligase type 1 subfamily. Monomer.

The protein localises to the cytoplasm. The catalysed reaction is tRNA(Glu) + L-glutamate + ATP = L-glutamyl-tRNA(Glu) + AMP + diphosphate. Functionally, catalyzes the attachment of glutamate to tRNA(Glu) in a two-step reaction: glutamate is first activated by ATP to form Glu-AMP and then transferred to the acceptor end of tRNA(Glu). This chain is Glutamate--tRNA ligase 1, found in Wolinella succinogenes (strain ATCC 29543 / DSM 1740 / CCUG 13145 / JCM 31913 / LMG 7466 / NCTC 11488 / FDC 602W) (Vibrio succinogenes).